The following is a 591-amino-acid chain: Putative BTB/POZ domain-containing protein At5g13600 (591 aa).

Residues 28–95 (PDVMIQVVDE…CYGVRIEVTP (68 aa)) enclose the BTB domain. An NPH3 domain is found at 208-493 (NWWFNDVSSF…VQVLFFEQMR (286 aa)). Tyr-434 carries the post-translational modification Phosphotyrosine.

Belongs to the NPH3 family.

Its pathway is protein modification; protein ubiquitination. Functionally, may act as a substrate-specific adapter of an E3 ubiquitin-protein ligase complex (CUL3-RBX1-BTB) which mediates the ubiquitination and subsequent proteasomal degradation of target proteins. The chain is Putative BTB/POZ domain-containing protein At5g13600 from Arabidopsis thaliana (Mouse-ear cress).